The primary structure comprises 1954 residues: Chromodomain-helicase-DNA-binding protein 5 (1954 aa).

Disordered stretches follow at residues 1-134 (MRGP…PKSS) and 225-338 (PLAV…GDGY). Acidic residues-rich tracts occupy residues 17–37 (EEME…EAFD) and 72–90 (NDEL…ESEG). Positions 96–115 (NKKKKKKLKDKKEKKAKRKK) are enriched in basic residues. A compositionally biased stretch (pro residues) spans 227–237 (AVSPPQVPQPV). Basic residues predominate over residues 251–272 (GVRKKIKGSKDGKKKGKGKKTA). Residues 291–301 (SEEDEREESDF) are compositionally biased toward acidic residues. A compositionally biased stretch (basic residues) spans 321 to 330 (KKSKRRRKKK). PHD-type zinc fingers lie at residues 343-390 (QDYC…CEKE) and 416-463 (MEFC…CTCP). The segment at 343–653 (QDYCEVCQQG…HRELMLGEDT (311 aa)) is histone-binding. One can recognise a Chromo 1 domain in the interval 497–554 (LPPPKPLEGIPEREFFVKWAGLSYWHCSWVKELQLELYHTVMYRNYQRKNDMDEPPPF). The interval 549-571 (DEPPPFDYGSGDEDGKSEKRKNK) is disordered. The span at 561–571 (EDGKSEKRKNK) shows a compositional bias: basic and acidic residues. One can recognise a Chromo 2 domain in the interval 592–653 (MMIHRILNHS…HRELMLGEDT (62 aa)). The Helicase ATP-binding domain occupies 712–896 (RFSWAQGTDT…FHLLNFLTPE (185 aa)). 725-732 (DEMGLGKT) is a binding site for ATP. A DEAH box motif is present at residues 847-850 (DEAH). One can recognise a Helicase C-terminal domain in the interval 1028–1193 (LLQKMLKKLR…MTKQELDDIL (166 aa)). Disordered stretches follow at residues 1209-1253 (MSQG…EDSS), 1351-1411 (YNDA…LPPL), 1524-1564 (YSTP…APLG), 1597-1640 (AALD…REEV), and 1658-1696 (SRGD…KKED). Acidic residues-rich tracts occupy residues 1355 to 1366 (SQEDQEWQDELS) and 1376 to 1385 (SEDEDEDFEE). The residue at position 1390 (Gln1390) is an N5-methylglutamine. Position 1554 is a phosphoserine (Ser1554). A compositionally biased stretch (low complexity) spans 1554–1564 (SPAHLLPAPLG). Basic and acidic residues-rich tracts occupy residues 1600–1627 (DRVE…ETEK) and 1658–1678 (SRGD…KEPI).

The protein belongs to the SNF2/RAD54 helicase family. In terms of assembly, component of the nucleosome remodeling and deacetylase (NuRD) repressor complex, composed of core proteins MTA1, MTA2, MTA3, RBBP4, RBBP7, HDAC1, HDAC2, MBD2, MBD3, and peripherally associated proteins CDK2AP1, CDK2AP2, GATAD2A, GATAD2B, CHD3, CHD4 and CHD5. The exact stoichiometry of the NuRD complex is unknown, and some subunits such as MBD2 and MBD3, GATAD2A and GATAD2B, and CHD3, CHD4 and CHD5 define mutually exclusive NuRD complexes. Interacts with HDAC2. In terms of processing, methylated at Gln-1390 by N6AMT1. Preferentially expressed in total brain, fetal brain, and cerebellum. It is also moderately expressed in the adrenal gland and detected in testis.

It is found in the nucleus. The protein resides in the chromosome. It carries out the reaction ATP + H2O = ADP + phosphate + H(+). Its function is as follows. ATP-dependent chromatin-remodeling factor that binds DNA through histones and regulates gene transcription. May specifically recognize and bind trimethylated 'Lys-27' (H3K27me3) and non-methylated 'Lys-4' of histone H3. Acts as a component of the histone deacetylase NuRD complex which participates in the remodeling of chromatin. Plays a role in the development of the nervous system by activating the expression of genes promoting neuron terminal differentiation. In parallel, it may also positively regulate the trimethylation of histone H3 at 'Lys-27' thereby specifically repressing genes that promote the differentiation into non-neuronal cell lineages. Regulates the expression of genes involved in cell proliferation and differentiation. Downstream activated genes may include CDKN2A that positively regulates the p53/TP53 pathway, which in turn, prevents cell proliferation. In spermatogenesis, it probably regulates histone hyperacetylation and the replacement of histones by transition proteins in chromatin, a crucial step in the condensation of spermatid chromatin and the production of functional spermatozoa. This Homo sapiens (Human) protein is Chromodomain-helicase-DNA-binding protein 5.